The chain runs to 282 residues: Undecaprenyl-diphosphatase (282 aa).

7 helical membrane passes run 6–26 (LYFVKAFFLGIIEGLTEFIPV), 45–65 (SGKVFEVVIQLGAILAVMWIF), 85–105 (LFTRNLLLAFFPAAIIGAIFI), 112–132 (FYHPGVVAVTLVLGGLIMLWV), 200–220 (ATEFSFFLAMPTMLGAAVYDM), 230–250 (HDLGAIAVGFVAAFLSALLVV), and 262–282 (YRGFAWYRIALGVVVAAWLAF).

Belongs to the UppP family.

The protein resides in the cell inner membrane. It catalyses the reaction di-trans,octa-cis-undecaprenyl diphosphate + H2O = di-trans,octa-cis-undecaprenyl phosphate + phosphate + H(+). Functionally, catalyzes the dephosphorylation of undecaprenyl diphosphate (UPP). Confers resistance to bacitracin. The chain is Undecaprenyl-diphosphatase from Bordetella avium (strain 197N).